The primary structure comprises 260 residues: Vesicle-associated membrane protein 7B (260 aa).

Residues 1–189 (MPIIYSLVAR…KCAMWWKNVK (189 aa)) are Cytoplasmic-facing. Positions 7–110 (LVARGSSVLA…GMNSDFSRTL (104 aa)) constitute a Longin domain. The region spanning 125-186 (TMSRTMAEID…KQLKCAMWWK (62 aa)) is the v-SNARE coiled-coil homology domain. The chain crosses the membrane as a helical; Anchor for type IV membrane protein span at residues 190–210 (LMLVLGAIVLIIIFIIVMSYC). Residues 211-260 (DGFRSGSKCRSSPSSNSTPTPTPTETPTPTPTPTSTPTPSQLLETLLNQF) lie on the Vesicular side of the membrane. The disordered stretch occupies residues 215–250 (SGSKCRSSPSSNSTPTPTPTETPTPTPTPTSTPTPS). The span at 230 to 246 (TPTPTETPTPTPTPTST) shows a compositional bias: pro residues.

The protein belongs to the synaptobrevin family.

It localises to the cytoplasmic vesicle. The protein localises to the secretory vesicle membrane. Its subcellular location is the golgi apparatus. It is found in the trans-Golgi network membrane. The protein resides in the late endosome membrane. It localises to the lysosome membrane. The protein localises to the endoplasmic reticulum membrane. Its subcellular location is the phagosome membrane. Functionally, involved in the targeting and/or fusion of transport vesicles to their target membrane during transport of proteins from the early endosome to the lysosome. Required for heterotypic fusion of late endosomes with lysosomes and homotypic lysosomal fusion. This chain is Vesicle-associated membrane protein 7B, found in Dictyostelium discoideum (Social amoeba).